Consider the following 424-residue polypeptide: Endoglucanase 1 (424 aa).

The first 18 residues, 1-18 (MAKFSALCSLALLGLATA), serve as a signal peptide directing secretion. 9 disulfides stabilise this stretch: Cys35-Cys41, Cys68-Cys90, Cys80-Cys86, Cys156-Cys384, Cys188-Cys211, Cys192-Cys210, Cys231-Cys250, Cys239-Cys244, and Cys255-Cys331. N-linked (GlcNAc...) asparagine glycosylation is present at Asn76. Glu213 acts as the Nucleophile in catalysis. Glu218 (proton donor) is an active-site residue. Asn271 and Asn385 each carry an N-linked (GlcNAc...) asparagine glycan.

This sequence belongs to the glycosyl hydrolase 7 (cellulase C) family. In terms of assembly, monomer.

The protein resides in the secreted. It catalyses the reaction Endohydrolysis of (1-&gt;4)-beta-D-glucosidic linkages in cellulose, lichenin and cereal beta-D-glucans.. In terms of biological role, endoglucanase that is involved in the biological conversion of cellulose to glucose. Hydrolyzes internal beta-1,4-glucosidic bonds. In Pyricularia oryzae (strain 70-15 / ATCC MYA-4617 / FGSC 8958) (Rice blast fungus), this protein is Endoglucanase 1.